Here is a 479-residue protein sequence, read N- to C-terminus: Ribosomal RNA small subunit methyltransferase F (479 aa).

S-adenosyl-L-methionine contacts are provided by residues 125-131, Glu149, Asp176, and Asp194; that span reads AAAPGSK. Cys247 serves as the catalytic Nucleophile.

Belongs to the class I-like SAM-binding methyltransferase superfamily. RsmB/NOP family.

Its subcellular location is the cytoplasm. The catalysed reaction is cytidine(1407) in 16S rRNA + S-adenosyl-L-methionine = 5-methylcytidine(1407) in 16S rRNA + S-adenosyl-L-homocysteine + H(+). Its function is as follows. Specifically methylates the cytosine at position 1407 (m5C1407) of 16S rRNA. This is Ribosomal RNA small subunit methyltransferase F from Salmonella schwarzengrund (strain CVM19633).